We begin with the raw amino-acid sequence, 97 residues long: Large ribosomal subunit protein bL27 (97 aa).

The tract at residues His-14–Ala-36 is disordered.

This sequence belongs to the bacterial ribosomal protein bL27 family.

The chain is Large ribosomal subunit protein bL27 from Streptococcus sanguinis (strain SK36).